Consider the following 465-residue polypeptide: Cysteine--tRNA ligase (465 aa).

Zn(2+) is bound at residue Cys27. The 'HIGH' region signature appears at 29–39 (PTVYNFFHIGN). Zn(2+) contacts are provided by Cys207, His232, and Glu236. The 'KMSKS' region motif lies at 264–268 (KMSKS). Residue Lys267 coordinates ATP.

This sequence belongs to the class-I aminoacyl-tRNA synthetase family. Monomer. It depends on Zn(2+) as a cofactor.

It localises to the cytoplasm. The enzyme catalyses tRNA(Cys) + L-cysteine + ATP = L-cysteinyl-tRNA(Cys) + AMP + diphosphate. This is Cysteine--tRNA ligase from Clostridium botulinum (strain Kyoto / Type A2).